The sequence spans 73 residues: Defensin-like protein 6 (73 aa).

The N-terminal stretch at 1-26 (MENKFFAAFFLLLVLFSSQEIIGGEG) is a signal peptide. 4 cysteine pairs are disulfide-bonded: cysteine 29–cysteine 73, cysteine 40–cysteine 60, cysteine 46–cysteine 67, and cysteine 50–cysteine 69.

Belongs to the DEFL family.

The protein resides in the secreted. Confers broad-spectrum resistance to pathogens. The sequence is that of Defensin-like protein 6 (PDF2.5) from Arabidopsis thaliana (Mouse-ear cress).